The chain runs to 551 residues: Tetrachloroethene reductive dehalogenase (551 aa).

The tat-type signal signal peptide spans 1–39; sequence MGEINRRNFLKASMLGAAAAAVASASVVKGVVSPLVADA. A 4Fe-4S ferredoxin-type 1 domain is found at 411–440; the sequence is PRKFGVREFCRLCKKCADACPAQAISHEKD. Residues cysteine 420, cysteine 423, cysteine 426, cysteine 430, cysteine 467, cysteine 478, cysteine 481, and cysteine 485 each contribute to the [4Fe-4S] cluster site. The region spanning 478–496 is the 4Fe-4S ferredoxin-type 2 domain; the sequence is CSNCVAVCSWNKVETWNHD.

The protein belongs to the PceA family. [4Fe-4S] cluster is required as a cofactor. It depends on corrinoid as a cofactor. Post-translationally, predicted to be exported by the Tat system. The position of the signal peptide cleavage has been experimentally proven.

It localises to the cell membrane. The enzyme catalyses trichloroethene + chloride + A + H(+) = tetrachloroethene + AH2. It catalyses the reaction trichloroethene + AH2 = (Z)-1,2-dichloroethene + chloride + A + H(+). In terms of biological role, catalyzes the reductive dechlorination of tetrachloroethene (PCE) to trichloroethene (TCE) and of trichloroethene to cis-1,2-dichloroethene (DCE). Reduced methyl viologen can act as the artificial electron donor. This is Tetrachloroethene reductive dehalogenase from Desulfitobacterium hafniense (Desulfitobacterium frappieri).